We begin with the raw amino-acid sequence, 114 residues long: Iron-sulfur cluster insertion protein ErpA (114 aa).

The iron-sulfur cluster site is built by cysteine 42, cysteine 106, and cysteine 108.

It belongs to the HesB/IscA family. As to quaternary structure, homodimer. Iron-sulfur cluster is required as a cofactor.

In terms of biological role, required for insertion of 4Fe-4S clusters for at least IspG. The polypeptide is Iron-sulfur cluster insertion protein ErpA (Shigella boydii serotype 18 (strain CDC 3083-94 / BS512)).